Reading from the N-terminus, the 82-residue chain is ATP synthase subunit c (82 aa).

2 consecutive transmembrane segments (helical) span residues 6-26 (LGLTCLAAAIGMAIAAAGCGI) and 49-69 (IMVTLILGLAFVESLAIYALV).

The protein belongs to the ATPase C chain family. In terms of assembly, F-type ATPases have 2 components, F(1) - the catalytic core - and F(0) - the membrane proton channel. F(1) has five subunits: alpha(3), beta(3), gamma(1), delta(1), epsilon(1). F(0) has three main subunits: a(1), b(2) and c(10-14). The alpha and beta chains form an alternating ring which encloses part of the gamma chain. F(1) is attached to F(0) by a central stalk formed by the gamma and epsilon chains, while a peripheral stalk is formed by the delta and b chains.

It is found in the cell inner membrane. F(1)F(0) ATP synthase produces ATP from ADP in the presence of a proton or sodium gradient. F-type ATPases consist of two structural domains, F(1) containing the extramembraneous catalytic core and F(0) containing the membrane proton channel, linked together by a central stalk and a peripheral stalk. During catalysis, ATP synthesis in the catalytic domain of F(1) is coupled via a rotary mechanism of the central stalk subunits to proton translocation. In terms of biological role, key component of the F(0) channel; it plays a direct role in translocation across the membrane. A homomeric c-ring of between 10-14 subunits forms the central stalk rotor element with the F(1) delta and epsilon subunits. The polypeptide is ATP synthase subunit c (Nitratidesulfovibrio vulgaris (strain ATCC 29579 / DSM 644 / CCUG 34227 / NCIMB 8303 / VKM B-1760 / Hildenborough) (Desulfovibrio vulgaris)).